An 846-amino-acid polypeptide reads, in one-letter code: Putative transcriptional regulator tpeD (846 aa).

The segment at 104 to 166 (KHQSECWQHF…NCRKSVPVSK (63 aa)) adopts a BED-type; degenerate zinc-finger fold. The disordered stretch occupies residues 734–846 (RAREERDAQQ…RDEDFVYETP (113 aa)). Residues 756–769 (PISDSEEAESEDES) are compositionally biased toward acidic residues. Over residues 773-786 (PQSPQASQARSQRS) the composition is skewed to low complexity. Positions 797–809 (PLIELDGNEEDEV) are enriched in acidic residues.

Its subcellular location is the nucleus. Its function is as follows. Putative transcriptional regulator; part of the gene cluster that mediates the biosynthesis of polyesters containing 2,4-dihydroxy-6-(2-hydroxypropyl)benzoate and 3-hydroxybutyrate moieties, such as talapolyester G, 15G256beta and 15G256beta-2; as well as to oxidized derivatives such as 15G256alpha. In Talaromyces stipitatus (strain ATCC 10500 / CBS 375.48 / QM 6759 / NRRL 1006) (Penicillium stipitatum), this protein is Putative transcriptional regulator tpeD.